Here is a 277-residue protein sequence, read N- to C-terminus: Shikimate dehydrogenase (NADP(+)) (277 aa).

Shikimate is bound by residues 15 to 17 (SLS) and T62. K66 functions as the Proton acceptor in the catalytic mechanism. Residues N87 and D102 each contribute to the shikimate site. NADP(+) is bound by residues 127 to 131 (GAGGA), 151 to 156 (NRTVDK), and I219. Residue Y221 participates in shikimate binding. G242 serves as a coordination point for NADP(+).

This sequence belongs to the shikimate dehydrogenase family. As to quaternary structure, homodimer.

It carries out the reaction shikimate + NADP(+) = 3-dehydroshikimate + NADPH + H(+). It functions in the pathway metabolic intermediate biosynthesis; chorismate biosynthesis; chorismate from D-erythrose 4-phosphate and phosphoenolpyruvate: step 4/7. Involved in the biosynthesis of the chorismate, which leads to the biosynthesis of aromatic amino acids. Catalyzes the reversible NADPH linked reduction of 3-dehydroshikimate (DHSA) to yield shikimate (SA). This Bacillus anthracis (strain CDC 684 / NRRL 3495) protein is Shikimate dehydrogenase (NADP(+)).